The following is a 326-amino-acid chain: MAVYTDITEDELAGFLAAYDVGTLTSYKGIAEGVENSNFLLHTTRGSYILTLYEKRVNADDLPFFLGLMHHLAERGLSCPLPLPRADGALLGTLSGRPAAVISFLEGMWLRKPEAQHCREVGRALASMHEAGEGFALTRANALSVGGWRPLWRNSEARADEVQDGLKEDIAAELAYLEDHWPRNLPQGVIHADLFPDNVFFLGDRLSGLIDFYFACNDFLAYDIAVCLNSWCFEKNGSYNITKGMALLSGYESVRKLTAEEVSALPLLARGSALRFFLTRLYDWLMTPAGALVVKKDPLEYLTKLRFHRAVVSSAEYGLRRDEASQ.

This sequence belongs to the pseudomonas-type ThrB family.

The enzyme catalyses L-homoserine + ATP = O-phospho-L-homoserine + ADP + H(+). The protein operates within amino-acid biosynthesis; L-threonine biosynthesis; L-threonine from L-aspartate: step 4/5. The polypeptide is Homoserine kinase (Sinorhizobium fredii (strain NBRC 101917 / NGR234)).